A 515-amino-acid chain; its full sequence is Fatty acyl-CoA reductase 2 (515 aa).

The Cytoplasmic portion of the chain corresponds to 1–465 (MSMIAAFYGG…AKQHLKRLRN (465 aa)). A helical membrane pass occupies residues 466–484 (IHYLFNTALFLIAWRLLIA). The Peroxisomal portion of the chain corresponds to 485–515 (RSQVARNVWFFIVSFCYKFLSYFRASSTLNV).

Belongs to the fatty acyl-CoA reductase family.

The protein resides in the peroxisome membrane. The enzyme catalyses a long-chain fatty acyl-CoA + 2 NADPH + 2 H(+) = a long-chain primary fatty alcohol + 2 NADP(+) + CoA. It catalyses the reaction hexadecanoyl-CoA + 2 NADPH + 2 H(+) = hexadecan-1-ol + 2 NADP(+) + CoA. It carries out the reaction octadecanoyl-CoA + 2 NADPH + 2 H(+) = octadecan-1-ol + 2 NADP(+) + CoA. The catalysed reaction is a very long-chain fatty acyl-CoA + 2 NADPH + 2 H(+) = a very long-chain primary fatty alcohol + 2 NADP(+) + CoA. The enzyme catalyses an ultra-long-chain fatty acyl-CoA + 2 NADPH + 2 H(+) = an ultra long-chain primary fatty alcohol + 2 NADP(+) + CoA. It catalyses the reaction eicosanoyl-CoA + 2 NADPH + 2 H(+) = eicosan-1-ol + 2 NADP(+) + CoA. It carries out the reaction docosanoyl-CoA + 2 NADPH + 2 H(+) = docosan-1-ol + 2 NADP(+) + CoA. The catalysed reaction is tetracosanoyl-CoA + 2 NADPH + 2 H(+) = tetracosan-1-ol + 2 NADP(+) + CoA. The enzyme catalyses hexacosanoyl-CoA + 2 NADPH + 2 H(+) = hexacosan-1-ol + 2 NADP(+) + CoA. It catalyses the reaction octacosanoyl-CoA + 2 NADPH + 2 H(+) = octacosan-1-ol + 2 NADP(+) + CoA. It carries out the reaction triacontanoyl-CoA + 2 NADPH + 2 H(+) = triacontan-1-ol + 2 NADP(+) + CoA. The catalysed reaction is 18-methylnonadecanoyl-CoA + 2 NADPH + 2 H(+) = 18-methylnonadecan-1-ol + 2 NADP(+) + CoA. The enzyme catalyses 20-methylheneicosanoyl-CoA + 2 NADPH + 2 H(+) = 20-methylheneicosan-1-ol + 2 NADP(+) + CoA. It catalyses the reaction 22-methyltricosanoyl-CoA + 2 NADPH + 2 H(+) = 22-methyltricosan-1-ol + 2 NADP(+) + CoA. It carries out the reaction 24-methylpentacosanoyl-CoA + 2 NADPH + 2 H(+) = 24-methylpentacosan-1-ol + 2 NADP(+) + CoA. Catalyzes the reduction of saturated but not unsaturated C16 or C18 fatty acyl-CoA to fatty alcohols (FAls). A lower activity can be observed with shorter fatty acyl-CoA substrates. Can produce very long-chain and ultra long-chain FAls, regardless of whether they have a straight or branched chain. Involved in the production of ether lipids/plasmalogens and wax monoesters whose synthesis requires FAls as substrates. In Bos taurus (Bovine), this protein is Fatty acyl-CoA reductase 2.